The primary structure comprises 44 residues: Relaxin (44 aa).

Gln-1 bears the Pyrrolidone carboxylic acid mark. 3 disulfides stabilise this stretch: Cys-3/Cys-31, Cys-15/Cys-44, and Cys-30/Cys-35.

This sequence belongs to the insulin family. Heterodimer of a B chain and an A chain linked by two disulfide bonds.

The protein localises to the secreted. The sequence is that of Relaxin from Carcharias taurus (Sand tiger shark).